Reading from the N-terminus, the 406-residue chain is Isocitrate dehydrogenase [NADP] (406 aa).

NADP(+) contacts are provided by Lys72, Thr75, Thr77, and Arg82. 5 residues coordinate D-threo-isocitrate: Ser94, Asn96, Arg100, Glu110, and Arg132. Asp250, Asp273, and Asp277 together coordinate Mn(2+). Residues Gly308, Thr309, Val310, His313, and Asn326 each contribute to the NADP(+) site.

Belongs to the isocitrate and isopropylmalate dehydrogenases family. In terms of assembly, homodimer. The cofactor is Mg(2+). Mn(2+) serves as cofactor.

It catalyses the reaction D-threo-isocitrate + NADP(+) = 2-oxoglutarate + CO2 + NADPH. In terms of biological role, catalyzes the oxidative decarboxylation of isocitrate to 2-oxoglutarate and carbon dioxide with the concomitant reduction of NADP(+). This Sphingobium yanoikuyae (Sphingomonas yanoikuyae) protein is Isocitrate dehydrogenase [NADP] (icd).